The primary structure comprises 359 residues: GTP cyclohydrolase FolE2 (359 aa).

The protein belongs to the GTP cyclohydrolase IV family.

It catalyses the reaction GTP + H2O = 7,8-dihydroneopterin 3'-triphosphate + formate + H(+). It functions in the pathway cofactor biosynthesis; 7,8-dihydroneopterin triphosphate biosynthesis; 7,8-dihydroneopterin triphosphate from GTP: step 1/1. Its function is as follows. Converts GTP to 7,8-dihydroneopterin triphosphate. The polypeptide is GTP cyclohydrolase FolE2 (Cereibacter sphaeroides (strain ATCC 17029 / ATH 2.4.9) (Rhodobacter sphaeroides)).